Reading from the N-terminus, the 480-residue chain is Ochratoxinase (480 aa).

Zn(2+) contacts are provided by H111, H113, K246, H287, and H307. K246 is an active-site residue. D378 is an active-site residue.

This sequence belongs to the metallo-dependent hydrolases superfamily. Ochratoxinase amidase 2 family. As to quaternary structure, homooctamer. Zn(2+) is required as a cofactor.

The protein localises to the secreted. The catalysed reaction is ochratoxin A + H2O = ochratoxin alpha + L-phenylalanine. Its activity is regulated as follows. The Zn(2+)-specific chelator 1,10-phenanthroline inhibits the enzyme activity. Functionally, carboxypeptidase that catalyzes the release of a C-terminal amino acid with specific catalytic activity for aromatic amino acids such as phenylalanine. Is able to degrade ochratoxin A, one of the five major mycotoxins most harmful to humans and animals that is produced by Aspergillus and Penicillium species and occurs in a wide range of agricultural products. The protein is Ochratoxinase of Aspergillus niger (strain ATCC 1015 / CBS 113.46 / FGSC A1144 / LSHB Ac4 / NCTC 3858a / NRRL 328 / USDA 3528.7).